The primary structure comprises 132 residues: Dormancy-associated protein 1 (132 aa).

The tract at residues 53–76 (MPAAVSPGTPTTPTTPTTPRKDNV) is disordered. Over residues 61 to 70 (TPTTPTTPTT) the composition is skewed to low complexity. T64 carries the phosphothreonine modification.

This sequence belongs to the DRM1/ARP family. Isoform 1: Expressed mainly in the low bolt. Isoform 2: Expressed mainly in the low bolt. Detected in flowers. Isoform 4: Expressed mainly in the low bolt. Isoform 5: Expressed mainly in the 6 days old seedlings. Detected in 16 days old seedlings, axil, low bolt and floral samples, but only barely in leaves and top bolt.

The chain is Dormancy-associated protein 1 from Arabidopsis thaliana (Mouse-ear cress).